A 715-amino-acid polypeptide reads, in one-letter code: Fatty acid oxidation complex subunit alpha (715 aa).

The tract at residues 1–190 (MIYEGKAITV…KVGAVDAVVA (190 aa)) is enoyl-CoA hydratase/isomerase. Asp297 is a substrate binding site. The 3-hydroxyacyl-CoA dehydrogenase stretch occupies residues 312–715 (HDVKQAAVLG…MAKNGQRFFN (404 aa)). Residues Met325, Asp344, 401 to 403 (VVE), Lys408, and Ser430 each bind NAD(+). Catalysis depends on His451, which acts as the For 3-hydroxyacyl-CoA dehydrogenase activity. Asn454 is a binding site for NAD(+). 2 residues coordinate substrate: Asn501 and Tyr660.

It in the N-terminal section; belongs to the enoyl-CoA hydratase/isomerase family. The protein in the C-terminal section; belongs to the 3-hydroxyacyl-CoA dehydrogenase family. Heterotetramer of two alpha chains (FadB) and two beta chains (FadA).

The enzyme catalyses a (3S)-3-hydroxyacyl-CoA + NAD(+) = a 3-oxoacyl-CoA + NADH + H(+). It catalyses the reaction a (3S)-3-hydroxyacyl-CoA = a (2E)-enoyl-CoA + H2O. The catalysed reaction is a 4-saturated-(3S)-3-hydroxyacyl-CoA = a (3E)-enoyl-CoA + H2O. It carries out the reaction (3S)-3-hydroxybutanoyl-CoA = (3R)-3-hydroxybutanoyl-CoA. The enzyme catalyses a (3Z)-enoyl-CoA = a 4-saturated (2E)-enoyl-CoA. It catalyses the reaction a (3E)-enoyl-CoA = a 4-saturated (2E)-enoyl-CoA. It functions in the pathway lipid metabolism; fatty acid beta-oxidation. Its function is as follows. Involved in the aerobic and anaerobic degradation of long-chain fatty acids via beta-oxidation cycle. Catalyzes the formation of 3-oxoacyl-CoA from enoyl-CoA via L-3-hydroxyacyl-CoA. It can also use D-3-hydroxyacyl-CoA and cis-3-enoyl-CoA as substrate. The polypeptide is Fatty acid oxidation complex subunit alpha (Pseudomonas putida (strain GB-1)).